A 273-amino-acid polypeptide reads, in one-letter code: 3-methyl-2-oxobutanoate hydroxymethyltransferase 1 (273 aa).

Mg(2+)-binding residues include Asp-49 and Asp-88. 3-methyl-2-oxobutanoate-binding positions include 49-50 (DS), Asp-88, and Lys-118. Glu-120 is a Mg(2+) binding site. Catalysis depends on Glu-187, which acts as the Proton acceptor.

This sequence belongs to the PanB family. Homodecamer; pentamer of dimers. It depends on Mg(2+) as a cofactor.

It localises to the cytoplasm. The enzyme catalyses 3-methyl-2-oxobutanoate + (6R)-5,10-methylene-5,6,7,8-tetrahydrofolate + H2O = 2-dehydropantoate + (6S)-5,6,7,8-tetrahydrofolate. It participates in cofactor biosynthesis; (R)-pantothenate biosynthesis; (R)-pantoate from 3-methyl-2-oxobutanoate: step 1/2. Its function is as follows. Catalyzes the reversible reaction in which hydroxymethyl group from 5,10-methylenetetrahydrofolate is transferred onto alpha-ketoisovalerate to form ketopantoate. The sequence is that of 3-methyl-2-oxobutanoate hydroxymethyltransferase 1 from Pseudomonas aeruginosa (strain UCBPP-PA14).